Consider the following 75-residue polypeptide: Exodeoxyribonuclease 7 small subunit (75 aa).

This sequence belongs to the XseB family. In terms of assembly, heterooligomer composed of large and small subunits.

The protein resides in the cytoplasm. The enzyme catalyses Exonucleolytic cleavage in either 5'- to 3'- or 3'- to 5'-direction to yield nucleoside 5'-phosphates.. Its function is as follows. Bidirectionally degrades single-stranded DNA into large acid-insoluble oligonucleotides, which are then degraded further into small acid-soluble oligonucleotides. The protein is Exodeoxyribonuclease 7 small subunit of Chlamydia caviae (strain ATCC VR-813 / DSM 19441 / 03DC25 / GPIC) (Chlamydophila caviae).